Here is a 565-residue protein sequence, read N- to C-terminus: Adenine deaminase (565 aa).

It belongs to the metallo-dependent hydrolases superfamily. Adenine deaminase family. Mn(2+) serves as cofactor.

The catalysed reaction is adenine + H2O + H(+) = hypoxanthine + NH4(+). This is Adenine deaminase from Cereibacter sphaeroides (strain ATCC 17025 / ATH 2.4.3) (Rhodobacter sphaeroides).